The primary structure comprises 81 residues: Protein Vpu (81 aa).

Residues 1 to 7 (MQPLQIL) lie on the Extracellular side of the membrane. Residues 8–28 (AIVALVVAAIIAIVVWTIVYI) traverse the membrane as a helical segment. Residues 29–81 (EYRKILRQRKIDRLIDRITERAEDSGNESEGDQEELSALVERGHLAPWDVDDL) are Cytoplasmic-facing. The interval 50–81 (AEDSGNESEGDQEELSALVERGHLAPWDVDDL) is disordered. Phosphoserine; by host CK2 is present on residues S53 and S57. The segment covering 53–63 (SGNESEGDQEE) has biased composition (acidic residues).

This sequence belongs to the HIV-1 VPU protein family. Homopentamer. Interacts with host CD4 and BRTC; these interactions induce proteasomal degradation of CD4. Interacts with host BST2; this interaction leads to the degradation of host BST2. Interacts with host FBXW11. Interacts with host AP1M1; this interaction plays a role in the mistrafficking and subsequent degradation of host BST2. Interacts with host RANBP2; this interaction allows Vpu to down-regulate host BLM sumoylation. In terms of processing, phosphorylated by host CK2. This phosphorylation is necessary for interaction with human BTRC and degradation of CD4.

Its subcellular location is the host membrane. Its activity is regulated as follows. Ion channel activity is inhibited by hexamethylene amiloride in vitro. In terms of biological role, enhances virion budding by targeting host CD4 and Tetherin/BST2 to proteasome degradation. Degradation of CD4 prevents any unwanted premature interactions between viral Env and its host receptor CD4 in the endoplasmic reticulum. Degradation of antiretroviral protein Tetherin/BST2 is important for virion budding, as BST2 tethers new viral particles to the host cell membrane. Mechanistically, Vpu bridges either CD4 or BST2 to BTRC, a substrate recognition subunit of the Skp1/Cullin/F-box protein E3 ubiquitin ligase, induces their ubiquitination and subsequent proteasomal degradation. The alteration of the E3 ligase specificity by Vpu seems to promote the degradation of host IKBKB, leading to NF-kappa-B down-regulation and subsequent apoptosis. Acts as a viroporin that forms an oligomeric ion channel in membranes. Modulates the host DNA repair mechanisms to promote degradation of nuclear viral cDNA in cells that are already productively infected in order to suppress immune sensing and proviral hyper-integration (superinfection). Manipulates PML-NBs and modulates SUMOylation of host BLM protein thereby enhancing its DNA-end processing activity toward viral unintegrated linear DNA. Also inhibits RAD52-mediated homologous repair of viral cDNA, preventing the generation of dead-end circular forms of single copies of the long terminal repeat and permitting sustained nucleolytic attack. The chain is Protein Vpu from Human immunodeficiency virus type 1 group M subtype B (isolate SF162) (HIV-1).